A 314-amino-acid polypeptide reads, in one-letter code: Secreted frizzled-related protein 5 (314 aa).

The N-terminal stretch at Met-1 to Gly-21 is a signal peptide. An FZ domain is found at Ser-45–Val-162. Disulfide bonds link Cys-50–Cys-113, Cys-60–Cys-106, Cys-97–Cys-132, Cys-121–Cys-159, Cys-125–Cys-149, Cys-178–Cys-250, Cys-181–Cys-252, and Cys-195–Cys-300. The NTR domain maps to Cys-178–Cys-300.

The protein belongs to the secreted frizzled-related protein (sFRP) family.

It localises to the secreted. Soluble frizzled-related proteins (sFRPS) function as modulators of Wnt signaling through direct interaction with Wnts. They have a role in regulating cell growth and differentiation in specific cell types. SFRP5 may be involved in determining the polarity of photoreceptor, and perhaps, other cells in the retina. This is Secreted frizzled-related protein 5 (Sfrp5) from Mus musculus (Mouse).